We begin with the raw amino-acid sequence, 147 residues long: Fluoride-specific ion channel FluC 1 (147 aa).

The next 4 helical transmembrane spans lie at 29-49 (YVYI…ISFL), 61-81 (IANL…IAFF), 90-110 (AITT…LELI), and 118-138 (FITL…LCYV). Na(+)-binding residues include Gly97 and Thr100.

This sequence belongs to the fluoride channel Fluc/FEX (TC 1.A.43) family.

The protein resides in the cell membrane. It catalyses the reaction fluoride(in) = fluoride(out). With respect to regulation, na(+) is not transported, but it plays an essential structural role and its presence is essential for fluoride channel function. Functionally, fluoride-specific ion channel. Important for reducing fluoride concentration in the cell, thus reducing its toxicity. The sequence is that of Fluoride-specific ion channel FluC 1 from Staphylococcus aureus (strain MRSA252).